The sequence spans 421 residues: UDP-N-acetylglucosamine 1-carboxyvinyltransferase (421 aa).

Phosphoenolpyruvate is bound at residue 22-23 (KN). Arginine 92 contacts UDP-N-acetyl-alpha-D-glucosamine. Residue aspartate 116 is the Proton donor of the active site. Residues 121–125 (RPIDQ), aspartate 307, and isoleucine 330 contribute to the UDP-N-acetyl-alpha-D-glucosamine site.

It belongs to the EPSP synthase family. MurA subfamily.

The protein resides in the cytoplasm. The catalysed reaction is phosphoenolpyruvate + UDP-N-acetyl-alpha-D-glucosamine = UDP-N-acetyl-3-O-(1-carboxyvinyl)-alpha-D-glucosamine + phosphate. It functions in the pathway cell wall biogenesis; peptidoglycan biosynthesis. Its function is as follows. Cell wall formation. Adds enolpyruvyl to UDP-N-acetylglucosamine. The sequence is that of UDP-N-acetylglucosamine 1-carboxyvinyltransferase from Lactobacillus johnsonii (strain CNCM I-12250 / La1 / NCC 533).